Reading from the N-terminus, the 438-residue chain is Iroquois-class homeodomain protein IRX-6 (438 aa).

The segment at residues 143-205 (SAGRRKNATR…NARRRLKKEN (63 aa)) is a DNA-binding region (homeobox). 2 disordered regions span residues 205–270 (NKMT…EAAV) and 388–438 (PRDS…GAEG). Positions 214–223 (KGGEERKADS) are enriched in basic and acidic residues. Residues 252-268 (LEDLEEEEEEEEAEEEA) are compositionally biased toward acidic residues.

The protein belongs to the TALE/IRO homeobox family. Expressed in a subset of retinal ganglion cells and bipolar cells; including in type 2 and type 3a bipolar cells.

The protein localises to the nucleus. Functionally, transcription factor. Binds to the iroquois binding site (IBS) motif of target genes to regulate gene expression; functions as a transcriptional activator or repressor. Modulates expression of RCVRN, VSX1, BHLHE22/BHLHB5 and TACR3/Nk3r. Required downstream of retinal bipolar cell specification for the terminal differentiation of type 2, type 3a and possibly type 6 bipolar cells. The chain is Iroquois-class homeodomain protein IRX-6 (Irx6) from Mus musculus (Mouse).